The following is a 200-amino-acid chain: MSRYTGPSWKLSRRLGVSLSGTGKELAKRPYAPGQHGPNQRKKLSEYALQLHEKQKLRHMYGVNERQFLRTFNDAGKMNGIHGENFMILLESRLDNLVYRMGLARTRRAARQLVNHGHVLVDGSRVDIPSYRVKPGQTIGLRERSRNLTVVKEALDVNDFTPGYVSFDEEKLEGTYTRYPERSELPAEITEALIVEWYSR.

The region spanning 92–155 (SRLDNLVYRM…RNLTVVKEAL (64 aa)) is the S4 RNA-binding domain.

It belongs to the universal ribosomal protein uS4 family. As to quaternary structure, part of the 30S ribosomal subunit. Contacts protein S5. The interaction surface between S4 and S5 is involved in control of translational fidelity.

Its function is as follows. One of the primary rRNA binding proteins, it binds directly to 16S rRNA where it nucleates assembly of the body of the 30S subunit. Functionally, with S5 and S12 plays an important role in translational accuracy. The sequence is that of Small ribosomal subunit protein uS4 from Shouchella clausii (strain KSM-K16) (Alkalihalobacillus clausii).